The sequence spans 350 residues: MELKEHIIDLPKKVYIGYDIIDNIKEYILSLNLSGPFLIVTGPLVRKIITDKIIENFKDESVEVVEVKIASIDEVNKVEEMAKGSRINTIIGVGGGNIIDVAKYVAYRIGKEFVSLPTAPSHDGITSPFASIKGLGKPTSVKAKGPIAIIADINVLASAPRRLINAGIGDTIGKITAVRDWQLAAKLRGEYYGDYTASLALMSAKHALSCAKILDKDVRAGVRVLTEALISSGVAMGMAGSTRPASGSEHLFAHAIEILYPDKALHGELVALGTILMAYIHGINWKKIKKAMKKVGLPTKAKQLGIPDEIIIKALTIAHTIRPERYTILGDRGLTWEAAEKIAKETGIID.

Residues 96 to 100 (GNIID) and 118 to 121 (TAPS) each bind NAD(+). Asp-123 serves as a coordination point for substrate. Ser-127 is a binding site for NAD(+). Asp-170 is a binding site for substrate. Residues Asp-170 and His-250 each coordinate Zn(2+). His-254 provides a ligand contact to substrate. Residue His-266 participates in Zn(2+) binding.

The protein belongs to the glycerol-1-phosphate dehydrogenase family. Homodimer. The cofactor is Zn(2+).

It localises to the cytoplasm. It carries out the reaction sn-glycerol 1-phosphate + NAD(+) = dihydroxyacetone phosphate + NADH + H(+). The enzyme catalyses sn-glycerol 1-phosphate + NADP(+) = dihydroxyacetone phosphate + NADPH + H(+). Its pathway is membrane lipid metabolism; glycerophospholipid metabolism. Catalyzes the NAD(P)H-dependent reduction of dihydroxyacetonephosphate (DHAP or glycerone phosphate) to glycerol 1-phosphate (G1P). The G1P thus generated is used as the glycerophosphate backbone of phospholipids in the cellular membranes of Archaea. This Sulfurisphaera tokodaii (strain DSM 16993 / JCM 10545 / NBRC 100140 / 7) (Sulfolobus tokodaii) protein is Glycerol-1-phosphate dehydrogenase [NAD(P)+].